Reading from the N-terminus, the 443-residue chain is Glutamate--tRNA ligase 1 (443 aa).

The 'HIGH' region motif lies at 9 to 19 (PSPTGYLHVGN). Residues 238–242 (KISKR) carry the 'KMSKS' region motif. K241 lines the ATP pocket.

It belongs to the class-I aminoacyl-tRNA synthetase family. Glutamate--tRNA ligase type 1 subfamily. As to quaternary structure, monomer.

It localises to the cytoplasm. The catalysed reaction is tRNA(Glu) + L-glutamate + ATP = L-glutamyl-tRNA(Glu) + AMP + diphosphate. Functionally, catalyzes the attachment of glutamate to tRNA(Glu) in a two-step reaction: glutamate is first activated by ATP to form Glu-AMP and then transferred to the acceptor end of tRNA(Glu). In Ehrlichia ruminantium (strain Welgevonden), this protein is Glutamate--tRNA ligase 1.